A 138-amino-acid polypeptide reads, in one-letter code: ATP synthase epsilon chain (138 aa).

Belongs to the ATPase epsilon chain family. In terms of assembly, F-type ATPases have 2 components, CF(1) - the catalytic core - and CF(0) - the membrane proton channel. CF(1) has five subunits: alpha(3), beta(3), gamma(1), delta(1), epsilon(1). CF(0) has three main subunits: a, b and c.

The protein localises to the cell inner membrane. Functionally, produces ATP from ADP in the presence of a proton gradient across the membrane. The protein is ATP synthase epsilon chain of Geobacter metallireducens (strain ATCC 53774 / DSM 7210 / GS-15).